The following is a 167-amino-acid chain: Fluoride-specific ion channel FluC (167 aa).

4 helical membrane-spanning segments follow: residues 32–52, 69–89, 102–122, and 137–157; these read HVTP…GALA, IGTL…IAYV, FMIT…AELF, and LGLH…TIGL. Positions 109 and 112 each coordinate Na(+).

This sequence belongs to the fluoride channel Fluc/FEX (TC 1.A.43) family.

Its subcellular location is the cell inner membrane. The enzyme catalyses fluoride(in) = fluoride(out). Its activity is regulated as follows. Na(+) is not transported, but it plays an essential structural role and its presence is essential for fluoride channel function. Functionally, fluoride-specific ion channel. Important for reducing fluoride concentration in the cell, thus reducing its toxicity. This Xanthomonas oryzae pv. oryzae (strain KACC10331 / KXO85) protein is Fluoride-specific ion channel FluC.